The primary structure comprises 486 residues: Alpha-L-arabinofuranosidase B (486 aa).

The first 25 residues, 1–25, serve as a signal peptide directing secretion; sequence MLSLKAVLRFASVAVAVVLPTLAQA. N-linked (GlcNAc...) asparagine glycosylation occurs at Asn42. A catalytic region spans residues 45 to 342; sequence LVKQRADPQI…KLYWRSDGTP (298 aa). Asp51 acts as the Proton acceptor in catalysis. Glu229 acts as the Proton donor in catalysis. N-linked (GlcNAc...) asparagine glycans are attached at residues Asn302, Asn416, and Asn426. Residues 359 to 467 form an ABD region; the sequence is SSADQTLYVG…AGSYLVSGGN (109 aa).

Belongs to the glycosyl hydrolase 43 family.

The protein resides in the secreted. The catalysed reaction is Hydrolysis of terminal non-reducing alpha-L-arabinofuranoside residues in alpha-L-arabinosides.. It participates in glycan metabolism; L-arabinan degradation. Secreted arabinofuranosidase that causes degradation of rice cell wall components during infection. Required for virulence. This chain is Alpha-L-arabinofuranosidase B, found in Pyricularia oryzae (strain 70-15 / ATCC MYA-4617 / FGSC 8958) (Rice blast fungus).